We begin with the raw amino-acid sequence, 307 residues long: MRIVFAGTPDFAVPSLRSVTQRADVVAVYTQPDRPAGRGRELMPSPVKLEAVARGLPVYQPQTLRSPEMLEQLRVLRPDLIVVVAYGVILPEAVLAIPDDGCWNVHASLLPRWRGAAPIQRAIEAGDTETGVCLMQMEAGLDTGPVLMSLKTPINAHETSGQLHDRLAEMGAQLLSDGLGLLRAGLRPVPQPQLAAGVTYAHKLGKVEARLDWEQPAERLACRVRAFQPWPVAEVVLSGERVRIHEALALDLDHSQPPGKVLAASKEGIDVACVQGALRLCRLQREGGKAITAADYLNARRDLQVRA.

(6S)-5,6,7,8-tetrahydrofolate is bound at residue 108 to 111; the sequence is SLLP.

It belongs to the Fmt family.

The enzyme catalyses L-methionyl-tRNA(fMet) + (6R)-10-formyltetrahydrofolate = N-formyl-L-methionyl-tRNA(fMet) + (6S)-5,6,7,8-tetrahydrofolate + H(+). Its function is as follows. Attaches a formyl group to the free amino group of methionyl-tRNA(fMet). The formyl group appears to play a dual role in the initiator identity of N-formylmethionyl-tRNA by promoting its recognition by IF2 and preventing the misappropriation of this tRNA by the elongation apparatus. In Xylella fastidiosa (strain M12), this protein is Methionyl-tRNA formyltransferase.